Reading from the N-terminus, the 356-residue chain is Histidinol-phosphate aminotransferase (356 aa).

An N6-(pyridoxal phosphate)lysine modification is found at K214.

Belongs to the class-II pyridoxal-phosphate-dependent aminotransferase family. Histidinol-phosphate aminotransferase subfamily. As to quaternary structure, homodimer. Requires pyridoxal 5'-phosphate as cofactor.

It carries out the reaction L-histidinol phosphate + 2-oxoglutarate = 3-(imidazol-4-yl)-2-oxopropyl phosphate + L-glutamate. It functions in the pathway amino-acid biosynthesis; L-histidine biosynthesis; L-histidine from 5-phospho-alpha-D-ribose 1-diphosphate: step 7/9. This is Histidinol-phosphate aminotransferase from Shigella flexneri serotype 5b (strain 8401).